Here is an 89-residue protein sequence, read N- to C-terminus: Large ribosomal subunit protein eL31 (89 aa).

Belongs to the eukaryotic ribosomal protein eL31 family.

This Thermoplasma acidophilum (strain ATCC 25905 / DSM 1728 / JCM 9062 / NBRC 15155 / AMRC-C165) protein is Large ribosomal subunit protein eL31 (rpl31e).